Here is a 256-residue protein sequence, read N- to C-terminus: Triosephosphate isomerase (256 aa).

Position 10–12 (10–12) interacts with substrate; the sequence is NWK. Histidine 97 serves as the catalytic Electrophile. Catalysis depends on glutamate 169, which acts as the Proton acceptor. Residues glycine 175, serine 214, and 235–236 each bind substrate; that span reads GG.

The protein belongs to the triosephosphate isomerase family. As to quaternary structure, homodimer.

It localises to the cytoplasm. The enzyme catalyses D-glyceraldehyde 3-phosphate = dihydroxyacetone phosphate. The protein operates within carbohydrate biosynthesis; gluconeogenesis. It functions in the pathway carbohydrate degradation; glycolysis; D-glyceraldehyde 3-phosphate from glycerone phosphate: step 1/1. Its function is as follows. Involved in the gluconeogenesis. Catalyzes stereospecifically the conversion of dihydroxyacetone phosphate (DHAP) to D-glyceraldehyde-3-phosphate (G3P). The sequence is that of Triosephosphate isomerase from Actinobacillus pleuropneumoniae serotype 7 (strain AP76).